Consider the following 349-residue polypeptide: Anthranilate phosphoribosyltransferase (349 aa).

5-phospho-alpha-D-ribose 1-diphosphate-binding positions include G82, G85–D86, N92–S95, K110–G118, and S122. Residue G82 coordinates anthranilate. S94 serves as a coordination point for Mg(2+). Residue N113 participates in anthranilate binding. R168 provides a ligand contact to anthranilate. Mg(2+) is bound by residues D227 and E228.

Belongs to the anthranilate phosphoribosyltransferase family. As to quaternary structure, homodimer. Mg(2+) is required as a cofactor.

The catalysed reaction is N-(5-phospho-beta-D-ribosyl)anthranilate + diphosphate = 5-phospho-alpha-D-ribose 1-diphosphate + anthranilate. Its pathway is amino-acid biosynthesis; L-tryptophan biosynthesis; L-tryptophan from chorismate: step 2/5. Its function is as follows. Catalyzes the transfer of the phosphoribosyl group of 5-phosphorylribose-1-pyrophosphate (PRPP) to anthranilate to yield N-(5'-phosphoribosyl)-anthranilate (PRA). This chain is Anthranilate phosphoribosyltransferase, found in Pseudomonas aeruginosa (strain LESB58).